A 118-amino-acid chain; its full sequence is Large ribosomal subunit protein bL20 (118 aa).

The protein belongs to the bacterial ribosomal protein bL20 family.

Its function is as follows. Binds directly to 23S ribosomal RNA and is necessary for the in vitro assembly process of the 50S ribosomal subunit. It is not involved in the protein synthesizing functions of that subunit. The chain is Large ribosomal subunit protein bL20 from Parvibaculum lavamentivorans (strain DS-1 / DSM 13023 / NCIMB 13966).